A 576-amino-acid chain; its full sequence is Trehalase (576 aa).

The N-terminal stretch at 1 to 20 (MTWELHLLLLLGLGLRSQEA) is a signal peptide. A glycan (N-linked (GlcNAc...) asparagine) is linked at Asn75. Residues Arg165, 172–173 (WD), Asn209, and 218–220 (RSQ) contribute to the substrate site. N-linked (GlcNAc...) asparagine glycosylation occurs at Asn258. Substrate is bound by residues 283–285 (RPE) and Gly316. Catalysis depends on Asp318, which acts as the Proton donor/acceptor. Asn366 carries an N-linked (GlcNAc...) asparagine glycan. Catalysis depends on Glu511, which acts as the Proton donor/acceptor. Residue Glu526 coordinates substrate. A lipid anchor (GPI-anchor amidated serine) is attached at Ser553. A propeptide spans 554–576 (GTQLASLGPHCLVAALLLSLLLQ) (removed in mature form).

It belongs to the glycosyl hydrolase 37 family. In terms of assembly, homodimer; disulfide-linked.

It is found in the cell membrane. The enzyme catalyses alpha,alpha-trehalose + H2O = alpha-D-glucose + beta-D-glucose. In terms of biological role, intestinal trehalase is probably involved in the hydrolysis of ingested trehalose. In Mus musculus (Mouse), this protein is Trehalase.